Reading from the N-terminus, the 140-residue chain is 3-hydroxyacyl-[acyl-carrier-protein] dehydratase FabZ (140 aa).

His48 is a catalytic residue.

Belongs to the thioester dehydratase family. FabZ subfamily.

The protein resides in the cytoplasm. It catalyses the reaction a (3R)-hydroxyacyl-[ACP] = a (2E)-enoyl-[ACP] + H2O. In terms of biological role, involved in unsaturated fatty acids biosynthesis. Catalyzes the dehydration of short chain beta-hydroxyacyl-ACPs and long chain saturated and unsaturated beta-hydroxyacyl-ACPs. The chain is 3-hydroxyacyl-[acyl-carrier-protein] dehydratase FabZ from Oceanobacillus iheyensis (strain DSM 14371 / CIP 107618 / JCM 11309 / KCTC 3954 / HTE831).